We begin with the raw amino-acid sequence, 103 residues long: Small ribosomal subunit protein uS14c (103 aa).

Residues 34–56 (KVSPLSLSEKTKMQEKLQSLPRN) are disordered.

It belongs to the universal ribosomal protein uS14 family. As to quaternary structure, part of the 30S ribosomal subunit.

It localises to the plastid. The protein localises to the chloroplast. Binds 16S rRNA, required for the assembly of 30S particles. The protein is Small ribosomal subunit protein uS14c of Saccharum hybrid (Sugarcane).